The chain runs to 34 residues: Beta/mu-theraphotoxin-Pe1a (34 aa).

Cystine bridges form between Cys2–Cys16, Cys9–Cys21, and Cys15–Cys28.

The protein belongs to the neurotoxin 10 (Hwtx-1) family. 54 (ProTx-1) subfamily. As to expression, expressed by the venom gland.

It localises to the secreted. Its function is as follows. Ion channel impairing toxin that inhibits voltage-gated sodium channels. The recombinantly expressed toxin shows a weak activity against Nav1.7/SCN9A (25% inhibition at 10 uM), and shifts the voltage dependence of channel activation to more depolarized potentials. This chain is Beta/mu-theraphotoxin-Pe1a, found in Phormingochilus everetti (Malaysian purple earth tiger tarantula).